We begin with the raw amino-acid sequence, 432 residues long: Anaerobic glycerol-3-phosphate dehydrogenase subunit B (432 aa).

This sequence belongs to the anaerobic G-3-P dehydrogenase subunit B family. Composed of a catalytic GlpA/B dimer and of membrane bound GlpC. Requires FMN as cofactor.

It catalyses the reaction a quinone + sn-glycerol 3-phosphate = dihydroxyacetone phosphate + a quinol. It functions in the pathway polyol metabolism; glycerol degradation via glycerol kinase pathway; glycerone phosphate from sn-glycerol 3-phosphate (anaerobic route): step 1/1. Conversion of glycerol 3-phosphate to dihydroxyacetone. Uses fumarate or nitrate as electron acceptor. This chain is Anaerobic glycerol-3-phosphate dehydrogenase subunit B, found in Histophilus somni (strain 129Pt) (Haemophilus somnus).